A 747-amino-acid polypeptide reads, in one-letter code: Sulfhydryl oxidase 1 (747 aa).

The N-terminal stretch at 1 to 29 (MRRCNSGSGPPPSLLLLLLWLLAVPGANA) is a signal peptide. Residues 36 to 156 (YSPSDPLTLL…RERLIDALES (121 aa)) enclose the Thioredoxin domain. Residues cysteine 70 and cysteine 73 each act as nucleophile in the active site. 2 cysteine pairs are disulfide-bonded: cysteine 70/cysteine 73 and cysteine 101/cysteine 110. N-linked (GlcNAc...) (complex) asparagine glycosylation occurs at asparagine 130. N-linked (GlcNAc...) asparagine glycosylation occurs at asparagine 243. A disulfide bond links cysteine 393 and cysteine 405. The ERV/ALR sulfhydryl oxidase domain occupies 396–503 (SEPHFRGFPC…EDPQFPKVQW (108 aa)). Residues arginine 401, tryptophan 408, and histidine 412 each contribute to the FAD site. At serine 426 the chain carries Phosphoserine; by FAM20C. Cysteine 449 and cysteine 452 are joined by a disulfide. Residues aspartate 451, histidine 455, 478–485 (WSSHNRVN), lysine 500, and tryptophan 503 each bind FAD. Cysteines 509 and 512 form a disulfide. The interval 573–633 (SRNSTLDPGK…HMAELQRNEQ (61 aa)) is disordered. N-linked (GlcNAc...) asparagine glycosylation occurs at asparagine 575. A compositionally biased stretch (basic and acidic residues) spans 621–633 (PPEHMAELQRNEQ). The chain crosses the membrane as a helical span at residues 710–730 (ISLCVGLYSLSFMGLLAMYTY).

This sequence belongs to the quiescin-sulfhydryl oxidase (QSOX) family. As to quaternary structure, monomer. It depends on FAD as a cofactor. In terms of processing, N-glycosylated. O-glycosylated on Thr and Ser residues. In terms of tissue distribution, expressed in heart, placenta, lung, liver, skeletal muscle, pancreas and very weakly in brain and kidney.

It is found in the golgi apparatus membrane. The protein resides in the secreted. It catalyses the reaction 2 R'C(R)SH + O2 = R'C(R)S-S(R)CR' + H2O2. In terms of biological role, catalyzes the oxidation of sulfhydryl groups in peptide and protein thiols to disulfides with the reduction of oxygen to hydrogen peroxide. Plays a role in disulfide bond formation in a variety of extracellular proteins. In fibroblasts, required for normal incorporation of laminin into the extracellular matrix, and thereby for normal cell-cell adhesion and cell migration. The sequence is that of Sulfhydryl oxidase 1 (QSOX1) from Homo sapiens (Human).